The primary structure comprises 166 residues: NADH-ubiquinone oxidoreductase chain 6 (166 aa).

6 consecutive transmembrane segments (helical) span residues 4–24 (FFSL…VVSA), 27–47 (QGVV…VFLG), 50–70 (FAAL…FGYC), 82–102 (VGGT…LLCL), 109–129 (LLVY…VGVF), and 135–155 (WGLI…LVIL).

This sequence belongs to the complex I subunit 6 family.

It localises to the mitochondrion membrane. The enzyme catalyses a ubiquinone + NADH + 5 H(+)(in) = a ubiquinol + NAD(+) + 4 H(+)(out). Functionally, core subunit of the mitochondrial membrane respiratory chain NADH dehydrogenase (Complex I) that is believed to belong to the minimal assembly required for catalysis. Complex I functions in the transfer of electrons from NADH to the respiratory chain. The immediate electron acceptor for the enzyme is believed to be ubiquinone. The chain is NADH-ubiquinone oxidoreductase chain 6 (MT-ND6) from Lycodon semicarinatus (Ryukyu odd-tooth snake).